The primary structure comprises 443 residues: Thymidine phosphorylase (443 aa).

The protein belongs to the thymidine/pyrimidine-nucleoside phosphorylase family. In terms of assembly, homodimer.

The enzyme catalyses thymidine + phosphate = 2-deoxy-alpha-D-ribose 1-phosphate + thymine. It participates in pyrimidine metabolism; dTMP biosynthesis via salvage pathway; dTMP from thymine: step 1/2. Its function is as follows. The enzymes which catalyze the reversible phosphorolysis of pyrimidine nucleosides are involved in the degradation of these compounds and in their utilization as carbon and energy sources, or in the rescue of pyrimidine bases for nucleotide synthesis. The protein is Thymidine phosphorylase of Photobacterium profundum (strain SS9).